The sequence spans 355 residues: Proto-oncogene Wnt-3 (355 aa).

A signal peptide spans 1–21 (MEPHLLGLLLGLLLGGTRVLA). 11 disulfide bridges follow: C80/C91, C131/C139, C141/C158, C206/C220, C208/C215, C284/C315, C300/C310, C314/C354, C330/C345, C332/C342, and C337/C338. N90 carries N-linked (GlcNAc...) asparagine glycosylation. A lipid anchor (O-palmitoleoyl serine; by PORCN) is attached at S212. A glycan (N-linked (GlcNAc...) asparagine) is linked at N301.

The protein belongs to the Wnt family. In terms of assembly, forms a soluble 1:1 complex with AFM; this prevents oligomerization and is required for prolonged biological activity. The complex with AFM may represent the physiological form in body fluids. Interacts with PORCN. Interacts with WLS. Post-translationally, palmitoleoylation is required for efficient binding to frizzled receptors. Depalmitoleoylation leads to Wnt signaling pathway inhibition.

The protein localises to the secreted. Its subcellular location is the extracellular space. The protein resides in the extracellular matrix. Its function is as follows. Ligand for members of the frizzled family of seven transmembrane receptors. Functions in the canonical Wnt signaling pathway that results in activation of transcription factors of the TCF/LEF family. Required for normal gastrulation, formation of the primitive streak, and for the formation of the mesoderm during early embryogenesis. Required for normal formation of the apical ectodermal ridge. Required for normal embryonic development, and especially for limb development. The chain is Proto-oncogene Wnt-3 (WNT3) from Homo sapiens (Human).